The primary structure comprises 452 residues: Probable ECA polymerase (452 aa).

11 helical membrane-spanning segments follow: residues 6–26 (FSGL…LTWF), 37–57 (VFFS…TSVL), 63–83 (VGVA…CFYG), 118–138 (VILM…NGFL), 155–175 (GVAL…VYFL), 181–201 (AWLF…MIVG), 207–227 (IIIA…ISLW), 228–248 (MLAA…LKRY), 341–361 (LVVM…GMII), 378–398 (YKAA…IVLA), and 410–430 (VFFL…FWLF).

Belongs to the WzyE family. Probably part of a complex composed of WzxE, WzyE and WzzE.

The protein localises to the cell inner membrane. Its pathway is bacterial outer membrane biogenesis; enterobacterial common antigen biosynthesis. In terms of biological role, probably involved in the polymerization of enterobacterial common antigen (ECA) trisaccharide repeat units. The protein is Probable ECA polymerase of Salmonella newport (strain SL254).